A 218-amino-acid chain; its full sequence is Probable GTP-binding protein EngB (218 aa).

Positions 31 to 205 (VGVEIAFAGR…LGILNEWCHP (175 aa)) constitute an EngB-type G domain. Residues 39–46 (GRSNAGKS), 66–70 (GRTQL), 84–87 (DLPG), 151–154 (TKCD), and 184–186 (FSS) contribute to the GTP site. Mg(2+)-binding residues include Ser-46 and Thr-68.

This sequence belongs to the TRAFAC class TrmE-Era-EngA-EngB-Septin-like GTPase superfamily. EngB GTPase family. Mg(2+) serves as cofactor.

Its function is as follows. Necessary for normal cell division and for the maintenance of normal septation. This chain is Probable GTP-binding protein EngB, found in Shewanella loihica (strain ATCC BAA-1088 / PV-4).